The primary structure comprises 207 residues: Dephospho-CoA kinase (207 aa).

A DPCK domain is found at 10-207 (TLGLTGGIGS…FYLTLRGGQS (198 aa)). 18–23 (GSGKSA) is an ATP binding site.

The protein belongs to the CoaE family.

It localises to the cytoplasm. The enzyme catalyses 3'-dephospho-CoA + ATP = ADP + CoA + H(+). It functions in the pathway cofactor biosynthesis; coenzyme A biosynthesis; CoA from (R)-pantothenate: step 5/5. Its function is as follows. Catalyzes the phosphorylation of the 3'-hydroxyl group of dephosphocoenzyme A to form coenzyme A. This chain is Dephospho-CoA kinase, found in Pseudomonas fluorescens (strain ATCC BAA-477 / NRRL B-23932 / Pf-5).